Here is a 342-residue protein sequence, read N- to C-terminus: Prenyl transferase penC (342 aa).

The chain crosses the membrane as a helical span at residues 17 to 37; sequence LSYLTLTVGALALVVVLYISI. Residue histidine 110 coordinates isopentenyl diphosphate. Aspartate 117 and aspartate 121 together coordinate Mg(2+). Arginine 126 contributes to the dimethylallyl diphosphate binding site. Residue asparagine 154 is glycosylated (N-linked (GlcNAc...) asparagine). Lysine 210 lines the dimethylallyl diphosphate pocket.

Belongs to the FPP/GGPP synthase family.

It is found in the membrane. It functions in the pathway secondary metabolite biosynthesis. Functionally, prenyl transferase; part of the gene cluster that mediates the biosynthesis of the indole diterpenes penitrems. The geranylgeranyl diphosphate (GGPP) synthase penG catalyzes the first step in penitrem biosynthesis via conversion of farnesyl pyrophosphate and isopentyl pyrophosphate into geranylgeranyl pyrophosphate (GGPP). Condensation of indole-3-glycerol phosphate with GGPP by the prenyl transferase penC then forms 3-geranylgeranylindole (3-GGI). Epoxidation by the FAD-dependent monooxygenase penM leads to a epoxidized-GGI that is substrate of the terpene cyclase penB for cyclization to yield paspaline. Paspaline is subsequently converted to 13-desoxypaxilline by the cytochrome P450 monooxygenase penP, the latter being then converted to paxilline by the cytochrome P450 monooxygenase penQ. Paxilline is converted to beta-paxitriol via C-10 ketoreduction by the short-chain dehydrogenase PC-15 which can be monoprenylated at the C-20 by the indole diterpene prenyltransferase penD. A two-step elimination (acetylation and elimination) process performed by the O-acetyltransferase PC-16 and the P.simplicissimum ptmI-ortholog not yet identified in P.crustosum, leads to the production of the prenylated form of penijanthine. The FAD-linked oxidoreductase ptmO then converts the prenylated form of penijanthine into PC-M5 which is in turn transformed into PC-M4 by the aromatic dimethylallyltransferase PC-22. A series of oxidation steps involving 4 cytochrome P450 monooxygenases (PC-21, PC-05, PC-23, PC-20) and a FAD-dependent monooxygenase (PC-14) are required for the transformation of PC-M4 to penitrems A and E. Synthesis of these final products is proposed to proceed via penitrems D and C (PC-21, PC-05, PC-14) and penitrems B and F (PC-21, PC-05, PC-14, PC-23). The protein is Prenyl transferase penC of Penicillium crustosum (Blue mold fungus).